A 183-amino-acid polypeptide reads, in one-letter code: ATP synthase subunit delta (183 aa).

This sequence belongs to the ATPase delta chain family. F-type ATPases have 2 components, F(1) - the catalytic core - and F(0) - the membrane proton channel. F(1) has five subunits: alpha(3), beta(3), gamma(1), delta(1), epsilon(1). F(0) has three main subunits: a(1), b(2) and c(10-14). The alpha and beta chains form an alternating ring which encloses part of the gamma chain. F(1) is attached to F(0) by a central stalk formed by the gamma and epsilon chains, while a peripheral stalk is formed by the delta and b chains.

It is found in the cell inner membrane. Its function is as follows. F(1)F(0) ATP synthase produces ATP from ADP in the presence of a proton or sodium gradient. F-type ATPases consist of two structural domains, F(1) containing the extramembraneous catalytic core and F(0) containing the membrane proton channel, linked together by a central stalk and a peripheral stalk. During catalysis, ATP synthesis in the catalytic domain of F(1) is coupled via a rotary mechanism of the central stalk subunits to proton translocation. Functionally, this protein is part of the stalk that links CF(0) to CF(1). It either transmits conformational changes from CF(0) to CF(1) or is implicated in proton conduction. This is ATP synthase subunit delta from Vesicomyosocius okutanii subsp. Calyptogena okutanii (strain HA).